The primary structure comprises 181 residues: Adenine phosphoribosyltransferase (181 aa).

Belongs to the purine/pyrimidine phosphoribosyltransferase family. As to quaternary structure, homodimer.

The protein localises to the cytoplasm. It catalyses the reaction AMP + diphosphate = 5-phospho-alpha-D-ribose 1-diphosphate + adenine. Its pathway is purine metabolism; AMP biosynthesis via salvage pathway; AMP from adenine: step 1/1. Catalyzes a salvage reaction resulting in the formation of AMP, that is energically less costly than de novo synthesis. The sequence is that of Adenine phosphoribosyltransferase from Rhizobium leguminosarum bv. trifolii (strain WSM2304).